A 278-amino-acid polypeptide reads, in one-letter code: Dehydrogenase/reductase SDR family member 4 (278 aa).

36–60 contributes to the NADP(+) binding site; it reads LVTASTDGIGFAIARRLAQDGAHVV. Residue Lys-92 is modified to N6-acetyllysine; alternate. N6-succinyllysine; alternate is present on Lys-92. Lys-105 carries the N6-acetyllysine modification. Substrate is bound at residue Ser-169. Tyr-182 acts as the Proton acceptor in catalysis. Residue Lys-186 coordinates NADP(+). Lys-216 carries the post-translational modification N6-acetyllysine; alternate. Lys-216 is subject to N6-succinyllysine; alternate. Ser-220 bears the Phosphoserine mark. Lys-227 and Lys-234 each carry N6-succinyllysine. A Peroxisomal targeting signal motif is present at residues 276 to 278; it reads SRL.

This sequence belongs to the short-chain dehydrogenases/reductases (SDR) family. Homotetramer.

The protein resides in the peroxisome. It catalyses the reaction a secondary alcohol + NADP(+) = a ketone + NADPH + H(+). The enzyme catalyses 3beta-hydroxy-5beta-pregnane-20-one + NADP(+) = 5beta-pregnan-3,20-dione + NADPH + H(+). The catalysed reaction is 5beta-dihydrotestosterone + NADPH + H(+) = 5beta-androstane-3beta,17beta-diol + NADP(+). It carries out the reaction 5beta-androstane-3,17-dione + NADPH + H(+) = 3beta-hydroxy-5beta-androstane-17-one + NADP(+). It catalyses the reaction isatin + NADPH + H(+) = 3-hydroxyindolin-2-one + NADP(+). The enzyme catalyses lithocholate + NADP(+) = 3-oxo-5beta-cholan-24-oate + NADPH + H(+). The catalysed reaction is 3-oxo-5beta-cholan-24-oate + NADPH + H(+) = isolithocholate + NADP(+). Functionally, NADPH-dependent oxidoreductase which catalyzes the reduction of a variety of compounds bearing carbonyl groups including ketosteroids, alpha-dicarbonyl compounds, aldehydes, aromatic ketones and quinones. Reduces 3-ketosteroids and benzil into 3beta-hydroxysteroids and R-benzoin, respectively, in contrast to the stereoselectivity of non-primate DHRS4s which produce 3alpha-hydroxysteroids and S-benzoin. Diplays low activity toward all-trans-retinal and no activity toward 9-cis-retinal as compared to non-primate mammals. In the reverse reaction, catalyze the NAD-dependent oxidation of 3beta-hydroxysteroids and alcohol, but with much lower efficiency. Involved in the metabolism of 3beta-hydroxysteroids, isatin and xenobiotic carbonyl compounds. The chain is Dehydrogenase/reductase SDR family member 4 (DHRS4) from Pongo abelii (Sumatran orangutan).